Reading from the N-terminus, the 459-residue chain is Carbonic anhydrase 9 (459 aa).

Residues M1 to P37 form the signal peptide. The interval Q38–D112 is proteoglycan-like (PG). Topologically, residues Q38–D414 are extracellular. Residues R42–P154 form a disordered region. Over residues G55–L95 the composition is skewed to acidic residues. Over residues P96–D112 the composition is skewed to basic and acidic residues. Residue T115 is glycosylated (O-linked (GlcNAc...) threonine). A compositionally biased stretch (basic and acidic residues) spans A129–H140. Positions Q138 to P391 are catalytic. One can recognise an Alpha-carbonic anhydrase domain in the interval S139–F390. A disulfide bond links C156 and C336. Residue H200 is the Proton donor/acceptor of the active site. The Zn(2+) site is built by H226, H228, and H251. T332 to T333 is a substrate binding site. N-linked (GlcNAc...) asparagine glycosylation occurs at N346. A helical membrane pass occupies residues I415–M435. The Cytoplasmic portion of the chain corresponds to R436–A459. Y449 is modified (phosphotyrosine).

The protein belongs to the alpha-carbonic anhydrase family. As to quaternary structure, forms oligomers linked by disulfide bonds. Zn(2+) is required as a cofactor. In terms of processing, asn-346 bears high-mannose type glycan structures. In terms of tissue distribution, expressed primarily in carcinoma cells lines. Expression is restricted to very few normal tissues and the most abundant expression is found in the epithelial cells of gastric mucosa.

Its subcellular location is the nucleus. The protein resides in the nucleolus. It localises to the cell membrane. It is found in the cell projection. The protein localises to the microvillus membrane. The enzyme catalyses hydrogencarbonate + H(+) = CO2 + H2O. With respect to regulation, inhibited by coumarins, saccharin, sulfonamide derivatives such as acetazolamide (AZA) and Foscarnet (phosphonoformate trisodium salt). In terms of biological role, catalyzes the interconversion between carbon dioxide and water and the dissociated ions of carbonic acid (i.e. bicarbonate and hydrogen ions). The polypeptide is Carbonic anhydrase 9 (CA9) (Homo sapiens (Human)).